A 32-amino-acid polypeptide reads, in one-letter code: GSPIQCAETCFIGKCYTEELGCTCTAFLCMKN.

The segment at residues 1 to 32 is a cross-link (cyclopeptide (Gly-Asn)); sequence GSPIQCAETCFIGKCYTEELGCTCTAFLCMKN. 3 cysteine pairs are disulfide-bonded: Cys-6–Cys-22, Cys-10–Cys-24, and Cys-15–Cys-29.

This sequence belongs to the cyclotide family. Moebius subfamily. This is a cyclic peptide.

In terms of biological role, probably participates in a plant defense mechanism. In Hybanthus floribundus (Greenviolet), this protein is Cyclotide Hyfl-B.